A 202-amino-acid chain; its full sequence is Peptidyl-tRNA hydrolase (202 aa).

Residue Tyr-19 participates in tRNA binding. His-24 serves as the catalytic Proton acceptor. TRNA-binding residues include Tyr-70, Asn-72, and Asn-118.

It belongs to the PTH family. As to quaternary structure, monomer.

The protein resides in the cytoplasm. The enzyme catalyses an N-acyl-L-alpha-aminoacyl-tRNA + H2O = an N-acyl-L-amino acid + a tRNA + H(+). In terms of biological role, hydrolyzes ribosome-free peptidyl-tRNAs (with 1 or more amino acids incorporated), which drop off the ribosome during protein synthesis, or as a result of ribosome stalling. Functionally, catalyzes the release of premature peptidyl moieties from peptidyl-tRNA molecules trapped in stalled 50S ribosomal subunits, and thus maintains levels of free tRNAs and 50S ribosomes. The polypeptide is Peptidyl-tRNA hydrolase (Prochlorococcus marinus (strain NATL2A)).